Reading from the N-terminus, the 142-residue chain is Hemoglobin subunit theta-1 (142 aa).

The region spanning 2-142 (ALSAEDRALV…VISALASEYR (141 aa)) is the Globin domain. H59 and H88 together coordinate heme b.

The protein belongs to the globin family.

The sequence is that of Hemoglobin subunit theta-1 (HBQ1) from Pongo pygmaeus (Bornean orangutan).